We begin with the raw amino-acid sequence, 158 residues long: NADPH-dependent 7-cyano-7-deazaguanine reductase (158 aa).

Cys56 acts as the Thioimide intermediate in catalysis. The Proton donor role is filled by Asp63. Substrate contacts are provided by residues 78–80 (LES) and 97–98 (HE).

It belongs to the GTP cyclohydrolase I family. QueF type 1 subfamily.

The protein resides in the cytoplasm. The enzyme catalyses 7-aminomethyl-7-carbaguanine + 2 NADP(+) = 7-cyano-7-deazaguanine + 2 NADPH + 3 H(+). It functions in the pathway tRNA modification; tRNA-queuosine biosynthesis. Its function is as follows. Catalyzes the NADPH-dependent reduction of 7-cyano-7-deazaguanine (preQ0) to 7-aminomethyl-7-deazaguanine (preQ1). This is NADPH-dependent 7-cyano-7-deazaguanine reductase from Nitrobacter hamburgensis (strain DSM 10229 / NCIMB 13809 / X14).